The chain runs to 527 residues: Phosphoenolpyruvate carboxykinase (ATP) (527 aa).

Substrate is bound by residues Arg-56, Tyr-191, and Lys-197. ATP is bound by residues Lys-197, His-216, and 232-240; that span reads GLSGTGKTT. Mn(2+)-binding residues include Lys-197 and His-216. Asp-253 is a binding site for Mn(2+). Residues Glu-281, Arg-318, 437–438, and Thr-443 each bind ATP; that span reads RI. Substrate is bound at residue Arg-318.

The protein belongs to the phosphoenolpyruvate carboxykinase (ATP) family. Requires Mn(2+) as cofactor.

It is found in the cytoplasm. The catalysed reaction is oxaloacetate + ATP = phosphoenolpyruvate + ADP + CO2. It participates in carbohydrate biosynthesis; gluconeogenesis. In terms of biological role, involved in the gluconeogenesis. Catalyzes the conversion of oxaloacetate (OAA) to phosphoenolpyruvate (PEP) through direct phosphoryl transfer between the nucleoside triphosphate and OAA. The polypeptide is Phosphoenolpyruvate carboxykinase (ATP) (Shouchella clausii (strain KSM-K16) (Alkalihalobacillus clausii)).